Reading from the N-terminus, the 402-residue chain is GDSL esterase/lipase At1g20120 (402 aa).

The N-terminal stretch at 1–35 is a signal peptide; it reads MLQDRVSGSLSSSKISRCVLFLSLFCFFLLTMHAS. Residues 41 to 69 form a disordered region; it reads RVPNPGPSPAPEPKPCPSPGPNPAPATTK. Over residues 44–64 the composition is skewed to pro residues; the sequence is NPGPSPAPEPKPCPSPGPNPA. An N-linked (GlcNAc...) asparagine glycan is attached at asparagine 73. Catalysis depends on serine 85, which acts as the Nucleophile. N-linked (GlcNAc...) asparagine glycosylation is found at asparagine 314 and asparagine 367. Catalysis depends on residues aspartate 375 and histidine 378.

This sequence belongs to the 'GDSL' lipolytic enzyme family.

The protein localises to the secreted. The polypeptide is GDSL esterase/lipase At1g20120 (Arabidopsis thaliana (Mouse-ear cress)).